Consider the following 442-residue polypeptide: Putative ammonium transporter sll1017 (442 aa).

The next 13 membrane-spanning stretches (helical) occupy residues 5–25, 44–64, 81–101, 104–124, 133–153, 155–175, 193–213, 240–260, 269–289, 299–319, 325–345, 354–374, and 386–406; these read NFPL…VGVA, LFLL…AMLE, TFDV…LMYG, PVLG…LDNV, WLFQ…AVMG, MYFK…YPIS, FAGS…AVVV, GVFI…LAFV, MLIA…ALAF, PNLL…TAGC, WSAI…TKLL, VGAW…VGIF, and IVGS…LFYV.

This sequence belongs to the ammonia transporter channel (TC 1.A.11.2) family.

It is found in the cell membrane. This chain is Putative ammonium transporter sll1017, found in Synechocystis sp. (strain ATCC 27184 / PCC 6803 / Kazusa).